A 323-amino-acid chain; its full sequence is tRNA dimethylallyltransferase (323 aa).

ATP is bound at residue 12 to 19 (GPTAAGKT). Substrate is bound at residue 14 to 19 (TAAGKT). 2 interaction with substrate tRNA regions span residues 37–40 (DSAL) and 161–165 (QRLIR).

The protein belongs to the IPP transferase family. In terms of assembly, monomer. The cofactor is Mg(2+).

It carries out the reaction adenosine(37) in tRNA + dimethylallyl diphosphate = N(6)-dimethylallyladenosine(37) in tRNA + diphosphate. Functionally, catalyzes the transfer of a dimethylallyl group onto the adenine at position 37 in tRNAs that read codons beginning with uridine, leading to the formation of N6-(dimethylallyl)adenosine (i(6)A). The chain is tRNA dimethylallyltransferase from Pseudomonas putida (strain ATCC 700007 / DSM 6899 / JCM 31910 / BCRC 17059 / LMG 24140 / F1).